A 394-amino-acid polypeptide reads, in one-letter code: Probable fatty acyl-CoA transferase Rv3272 (394 aa).

The active-site Nucleophile is Asp-175.

Belongs to the CoA-transferase III family. Homodimer.

In terms of biological role, probably involved in fatty acid metabolism. Binds to fatty acyl-CoAs of varying carbon chain lengths, with the highest binding affinity for palmitoyl-CoA (C16:0). In vitro, alters the cell wall lipid profile and protects mycobacteria from acidic, oxidative and antibiotic stress. May play a significant role in host-pathogen interaction. The sequence is that of Probable fatty acyl-CoA transferase Rv3272 from Mycobacterium tuberculosis (strain ATCC 25618 / H37Rv).